The sequence spans 305 residues: Aspartate carbamoyltransferase catalytic subunit (305 aa).

Arg51 and Thr52 together coordinate carbamoyl phosphate. An L-aspartate-binding site is contributed by Lys79. Residues Arg101, His130, and Gln133 each coordinate carbamoyl phosphate. L-aspartate contacts are provided by Arg163 and Arg215. Positions 256 and 257 each coordinate carbamoyl phosphate.

It belongs to the aspartate/ornithine carbamoyltransferase superfamily. ATCase family. In terms of assembly, heterododecamer (2C3:3R2) of six catalytic PyrB chains organized as two trimers (C3), and six regulatory PyrI chains organized as three dimers (R2).

It carries out the reaction carbamoyl phosphate + L-aspartate = N-carbamoyl-L-aspartate + phosphate + H(+). Its pathway is pyrimidine metabolism; UMP biosynthesis via de novo pathway; (S)-dihydroorotate from bicarbonate: step 2/3. Its function is as follows. Catalyzes the condensation of carbamoyl phosphate and aspartate to form carbamoyl aspartate and inorganic phosphate, the committed step in the de novo pyrimidine nucleotide biosynthesis pathway. In Ehrlichia canis (strain Jake), this protein is Aspartate carbamoyltransferase catalytic subunit.